A 298-amino-acid polypeptide reads, in one-letter code: uncharacterized protein (298 aa).

The next 9 membrane-spanning stretches (helical) occupy residues 10–30 (VIYT…WKLL), 36–56 (LDIL…VLFF), 76–96 (ILSL…YIWA), 101–121 (FLLE…LLGI), 142–162 (GVII…LLAF), 179–199 (AIGL…YLLF), 212–232 (GTWL…LLFA), 243–263 (VGIL…FVYH), and 271–291 (AFTF…QVKW). EamA domains are found at residues 17–148 (FIMW…ISAF) and 162–286 (FSFG…LFTF).

Belongs to the EamA transporter family.

The protein localises to the cell membrane. This is an uncharacterized protein from Bacillus subtilis (strain 168).